A 1149-amino-acid polypeptide reads, in one-letter code: Protein deacetylase HDAC6 (1149 aa).

Positions 1 to 61 (MTSTGQDSST…KGKMKKLSQP (61 aa)) are disordered. The segment covering 18 to 29 (NPQSPLQESSAT) has biased composition (polar residues). Position 21 is a phosphoserine (S21). Residue R32 is modified to Omega-N-methylarginine. S43 carries the phosphoserine modification. Residues 66-75 (LVVGLQGLDL) carry the Nuclear export signal motif. Histone deacetylase regions lie at residues 87–403 (LVFD…TLLG) and 481–799 (GLVY…SLLG). H215 (1) is an active-site residue. Residue H610 is the 2 of the active site. Positions 954 to 975 (ALGETEPTPPASHTNKQTTGAS) are disordered. Phosphothreonine is present on residues T958, T961, T967, and T971. Residues 964 to 975 (ASHTNKQTTGAS) are compositionally biased toward polar residues. A Phosphoserine modification is found at S975. The segment at 1045–1143 (SWCPHLMAVC…NAAHQNKFGE (99 aa)) adopts a UBP-type zinc-finger fold. Zn(2+)-binding residues include C1047, H1049, C1067, C1070, C1079, C1082, and C1087. Positions 1088–1090 (SRY) are ubiquitin binding. Zn(2+)-binding residues include H1094, H1098, H1104, C1117, and C1120. Residues 1116-1123 (WCYVCQAY) are ubiquitin binding. Position 1148 is a phosphoserine (S1148).

This sequence belongs to the histone deacetylase family. HD type 2 subfamily. Forms a trimeric complex in the nucleus consisting of BANP, HDAC6 and KHDRBS1/SAM68; HDAC6 keeps KHDRBS1 in a deacetylated state which inhibits the inclusion of CD44 alternate exons. The complex is disrupted by MAPK1/MAPK3-mediated phosphorylation of BANP which results in BANP export to the cytoplasm. This facilitates acetylation of KHDRBS1 and CD44 variant exon inclusion. Interacts with SIRT2 (via both phosphorylated, unphosphorylated, active or inactive forms); the interaction is necessary for the complex to interact with alpha-tubulin. Under proteasome impairment conditions, interacts with UBD via its histone deacetylase 1 and UBP-type zinc-finger regions. Interacts with BBIP1, CBFA2T3, CYLD, DDIT3/CHOP, ZMYND15, F-actin and HDAC11. Interacts with RIPOR2; this interaction occurs during early myogenic differentiation and prevents HDAC6 to deacetylate tubulin. Interacts with AURKA; AURKA-mediated phosphorylation of HDAC6 promotes deacetylation of alpha-tubulin. Interacts with DYSF; this interaction occurs during early myogenic differentiation. Interacts with TPPP; inhibiting the tubulin deacetylase activity of HDAC6. Interacts with DYNLL1. Interacts with ATP13A2; the interaction results in recruitment of HDAC6 to lysosomes to promote CTTN deacetylation. Interacts with CCDC141 (via the N-terminal region); inhibiting the deacetylase activity of HDAC6. Interacts with IPO7; the interaction facilitates HDAC6 nuclear translocation in dental papilla cells. The cofactor is Zn(2+). Post-translationally, phosphorylated by AURKA; phosphorylation increases HDAC6-mediated deacetylation of alpha-tubulin and subsequent disassembly of cilia. In terms of processing, ubiquitinated. Its polyubiquitination however does not lead to its degradation. Sumoylated in vitro. Expressed in neurons of the cortex. Expressed in Purkinje cells. Detected in keratinocytes (at protein level).

It localises to the cytoplasm. The protein localises to the cytoskeleton. Its subcellular location is the nucleus. It is found in the perikaryon. The protein resides in the cell projection. It localises to the dendrite. The protein localises to the axon. Its subcellular location is the cilium. It is found in the microtubule organizing center. The protein resides in the centrosome. It localises to the cilium basal body. It catalyses the reaction N(6)-acetyl-L-lysyl-[protein] + H2O = L-lysyl-[protein] + acetate. It carries out the reaction N(6)-acetyl-L-lysyl-[alpha-tubulin] + H2O = L-lysyl-[alpha-tubulin] + acetate. It functions in the pathway protein modification; protein ubiquitination. Deacetylates a wide range of non-histone substrates. Plays a central role in microtubule-dependent cell motility by mediating deacetylation of tubulin. Required for cilia disassembly via deacetylation of alpha-tubulin. Alpha-tubulin deacetylation results in destabilization of dynamic microtubules. Promotes deacetylation of CTTN, leading to actin polymerization, promotion of autophagosome-lysosome fusion and completion of autophagy. Deacetylates SQSTM1. Deacetylates peroxiredoxins PRDX1 and PRDX2, decreasing their reducing activity. Deacetylates antiviral protein RIGI in the presence of viral mRNAs which is required for viral RNA detection by RIGI. Sequentially deacetylates and polyubiquitinates DNA mismatch repair protein MSH2 which leads to MSH2 degradation, reducing cellular sensitivity to DNA-damaging agents and decreasing cellular DNA mismatch repair activities. Deacetylates DNA mismatch repair protein MLH1 which prevents recruitment of the MutL alpha complex (formed by the MLH1-PMS2 heterodimer) to the MutS alpha complex (formed by the MSH2-MSH6 heterodimer), leading to tolerance of DNA damage. Deacetylates RHOT1/MIRO1 which blocks mitochondrial transport and mediates axon growth inhibition. Deacetylates transcription factor SP1 which leads to increased expression of ENG, positively regulating angiogenesis. Deacetylates KHDRBS1/SAM68 which regulates alternative splicing by inhibiting the inclusion of CD44 alternate exons. Promotes odontoblast differentiation following IPO7-mediated nuclear import and subsequent repression of RUNX2 expression. In addition to its protein deacetylase activity, plays a key role in the degradation of misfolded proteins: when misfolded proteins are too abundant to be degraded by the chaperone refolding system and the ubiquitin-proteasome, mediates the transport of misfolded proteins to a cytoplasmic juxtanuclear structure called aggresome. Probably acts as an adapter that recognizes polyubiquitinated misfolded proteins and target them to the aggresome, facilitating their clearance by autophagy. The sequence is that of Protein deacetylase HDAC6 from Mus musculus (Mouse).